The chain runs to 266 residues: Dihydropteroate synthase (266 aa).

The region spanning 12 to 260 is the Pterin-binding domain; sequence AAIMGILNVT…DVKANQDIVA (249 aa). N19 serves as a coordination point for Mg(2+). (7,8-dihydropterin-6-yl)methyl diphosphate contacts are provided by residues T59, D93, N112, D176, K212, and 248 to 250; that span reads RVH.

It belongs to the DHPS family. In terms of assembly, homodimer or homotrimer. It depends on Mg(2+) as a cofactor.

The catalysed reaction is (7,8-dihydropterin-6-yl)methyl diphosphate + 4-aminobenzoate = 7,8-dihydropteroate + diphosphate. It functions in the pathway cofactor biosynthesis; tetrahydrofolate biosynthesis; 7,8-dihydrofolate from 2-amino-4-hydroxy-6-hydroxymethyl-7,8-dihydropteridine diphosphate and 4-aminobenzoate: step 1/2. Catalyzes the condensation of para-aminobenzoate (pABA) with 6-hydroxymethyl-7,8-dihydropterin diphosphate (DHPt-PP) to form 7,8-dihydropteroate (H2Pte), the immediate precursor of folate derivatives. This is Dihydropteroate synthase (folP) from Streptococcus pyogenes serotype M3 (strain ATCC BAA-595 / MGAS315).